The chain runs to 122 residues: Acidic phospholipase A2 2 (122 aa).

7 disulfides stabilise this stretch: cysteine 26/cysteine 115, cysteine 28/cysteine 44, cysteine 43/cysteine 95, cysteine 49/cysteine 122, cysteine 50/cysteine 88, cysteine 57/cysteine 81, and cysteine 75/cysteine 86. Positions 27, 29, and 31 each coordinate Ca(2+). Residue histidine 47 is part of the active site. Aspartate 48 provides a ligand contact to Ca(2+). Residue aspartate 89 is part of the active site.

It belongs to the phospholipase A2 family. Group II subfamily. D49 sub-subfamily. Ca(2+) is required as a cofactor. As to expression, expressed by the venom gland.

Its subcellular location is the secreted. The enzyme catalyses a 1,2-diacyl-sn-glycero-3-phosphocholine + H2O = a 1-acyl-sn-glycero-3-phosphocholine + a fatty acid + H(+). Its function is as follows. Snake venom phospholipase A2 (PLA2) that has high lipolytic activity. PLA2 catalyzes the calcium-dependent hydrolysis of the 2-acyl groups in 3-sn-phosphoglycerides. The sequence is that of Acidic phospholipase A2 2 from Craspedocephalus gramineus (Bamboo pit viper).